The sequence spans 455 residues: Glycosyl hydrolase family 109 protein (455 aa).

The tat-type signal signal peptide spans 1–33; that stretch reads MAGIDRRGFLKASMASVAAAALAGCASQQGTSA. Residues 62–63, Asp84, Gln112, 133–136, 153–154, and Asn182 contribute to the NAD(+) site; these read ER, WALH, and EV. Substrate is bound by residues Tyr211, Arg230, 242–245, and Tyr324; that span reads YPTH. Tyr242 provides a ligand contact to NAD(+).

Belongs to the Gfo/Idh/MocA family. Glycosyl hydrolase 109 subfamily. Requires NAD(+) as cofactor. Predicted to be exported by the Tat system. The position of the signal peptide cleavage has not been experimentally proven.

Glycosidase. This chain is Glycosyl hydrolase family 109 protein, found in Shewanella amazonensis (strain ATCC BAA-1098 / SB2B).